A 681-amino-acid polypeptide reads, in one-letter code: tRNA wybutosine-synthesizing protein 4 (681 aa).

Basic residues predominate over residues 1 to 11; the sequence is MSNKNQRKTKS. Positions 1–21 are disordered; sequence MSNKNQRKTKSKDREVRKTND. S-adenosyl-L-methionine contacts are provided by residues R66, G92, D119, 165 to 166, and E193; that span reads NL.

Belongs to the methyltransferase superfamily. LCMT family.

The catalysed reaction is 7-[(3S)-3-amino-3-carboxypropyl]wyosine(37) in tRNA(Phe) + S-adenosyl-L-methionine = 7-[(3S)-(3-amino-3-methoxycarbonyl)propyl]wyosine(37) in tRNA(Phe) + S-adenosyl-L-homocysteine. It catalyses the reaction 7-[(3S)-(3-amino-3-methoxycarbonyl)propyl]wyosine(37) in tRNA(Phe) + S-adenosyl-L-methionine + CO2 = wybutosine(37) in tRNA(Phe) + S-adenosyl-L-homocysteine + 2 H(+). The protein operates within tRNA modification; wybutosine-tRNA(Phe) biosynthesis. Functionally, probable S-adenosyl-L-methionine-dependent methyltransferase that acts as a component of the wybutosine biosynthesis pathway. Wybutosine is a hyper modified guanosine with a tricyclic base found at the 3'-position adjacent to the anticodon of eukaryotic phenylalanine tRNA. May methylate the carboxyl group of leucine residues to form alpha-leucine ester residues. The protein is tRNA wybutosine-synthesizing protein 4 (ppm2) of Schizosaccharomyces pombe (strain 972 / ATCC 24843) (Fission yeast).